The following is a 778-amino-acid chain: Subtilisin-like protease SBT5.4 (778 aa).

The signal sequence occupies residues 1–35 (MSMTRRYSSTQYSNKMSLQSLSSLLLLVTLFFSPA). Residues 41 to 126 (SYIVYLGSHA…VFPNKGRKLH (86 aa)) enclose the Inhibitor I9 domain. The 505-residue stretch at 130 to 634 (SWNFMLLAKN…SGHVQPNKAA (505 aa)) folds into the Peptidase S8 domain. The active-site Charge relay system is the aspartate 163. Asparagine 218 carries an N-linked (GlcNAc...) asparagine glycan. Catalysis depends on histidine 230, which acts as the Charge relay system. Residues asparagine 253 and asparagine 404 are each glycosylated (N-linked (GlcNAc...) asparagine). One can recognise a PA domain in the interval 401 to 486 (ANGNVTDALL…KDGETLFSYL (86 aa)). Residue serine 567 is the Charge relay system of the active site. N-linked (GlcNAc...) asparagine glycans are attached at residues asparagine 657, asparagine 690, and asparagine 732.

The protein belongs to the peptidase S8 family. Expressed in the vasculature of roots and leaves, stomata, sepals, stigma, anthers and siliques.

The protein resides in the endoplasmic reticulum. It localises to the cell membrane. Its function is as follows. Serine protease. Has a substrate preference for the hydrophobic residues Phe and Ala and the basic residue Asp in the P1 position, and for Asp, Leu or Ala in the P1' position. Interferes with CLAVATA 3 (CLV3) signaling, but does not cleave CLV3. The chain is Subtilisin-like protease SBT5.4 from Arabidopsis thaliana (Mouse-ear cress).